The following is a 320-amino-acid chain: FHA domain-containing protein FHA2 (320 aa).

A2 carries the post-translational modification N-acetylalanine. In terms of domain architecture, FHA spans 32–89 (IILGRNSKKATVDVDLSSLGGGMNISRNHARIFYDFTRRRFSLEVLGKNGCLVEGVLH). The tract at residues 138–211 (VPYHNYQSGP…REGRSKVDRE (74 aa)) is disordered. The span at 163 to 178 (EYDDEDDDDDDDEEDD) shows a compositional bias: acidic residues. Over residues 198-210 (GEKKREGRSKVDR) the composition is skewed to basic and acidic residues.

As to expression, widely expressed.

It is found in the nucleus. In terms of biological role, may play a role in the control of plant organ development and specifically in the regulation of stamen development. Does not show transactivation activity in yeast. The protein is FHA domain-containing protein FHA2 of Arabidopsis thaliana (Mouse-ear cress).